Here is a 484-residue protein sequence, read N- to C-terminus: GTPase Obg (484 aa).

One can recognise an Obg domain in the interval 7–164 (PRFVDRVVIH…RDLTLELKTV (158 aa)). Residues 21-43 (SGGNGCASVHREKFKPLGGPDGG) are disordered. Positions 165 to 345 (ADVGLVGFPS…LIFGLSQMIS (181 aa)) constitute an OBG-type G domain. GTP-binding positions include 171 to 178 (GFPSAGKS), 196 to 200 (FTTLV), 217 to 220 (DVPG), 297 to 300 (NKID), and 326 to 328 (STA). Mg(2+)-binding residues include Ser-178 and Thr-198. The OCT domain maps to 363–441 (PIPVDDSGFT…IGEMTFDWEP (79 aa)). The segment at 439 to 484 (WEPQTPAGEPVAMSGRGTDPRLDSNKRVGAAERKAARSRRREHGDG) is disordered. Residues 456-473 (TDPRLDSNKRVGAAERKA) show a composition bias toward basic and acidic residues. Residues 474-484 (ARSRRREHGDG) show a composition bias toward basic residues.

This sequence belongs to the TRAFAC class OBG-HflX-like GTPase superfamily. OBG GTPase family. Monomer. Mg(2+) serves as cofactor.

The protein localises to the cytoplasm. Its function is as follows. An essential GTPase which binds GTP, GDP and possibly (p)ppGpp with moderate affinity, with high nucleotide exchange rates and a fairly low GTP hydrolysis rate. Plays a role in control of the cell cycle, stress response, ribosome biogenesis and in those bacteria that undergo differentiation, in morphogenesis control. In Mycobacterium tuberculosis (strain CDC 1551 / Oshkosh), this protein is GTPase Obg.